The primary structure comprises 125 residues: E4-ORF1 (125 aa).

The PDZ-binding signature appears at 122–125; it reads ATLV.

It belongs to the dUTPase family. In terms of assembly, binds to human MPDZ.

It localises to the host cytoplasm. The catalysed reaction is dUTP + H2O = dUMP + diphosphate + H(+). Its function is as follows. Plays a key role in virus oncogenecity in animals. Binds and sequesters human MUPP1/MPDZ protein in the cytoplasm, preventing it from playing a role in cellular proliferation regulation. Induces cell transformation, probably by inactivating MPDZ protein. The sequence is that of E4-ORF1 (E4) from Homo sapiens (Human).